We begin with the raw amino-acid sequence, 159 residues long: Succinate dehydrogenase [ubiquinone] cytochrome b small subunit, mitochondrial (159 aa).

A mitochondrion-targeting transit peptide spans 1 to 56 (MAVLLKLGVLCSGQGARALSLRSRAVRPAFVSAFLQDQPTPGWRGTQHIHLSPSHQ). Residues 57 to 63 (SGSKAAS) lie on the Mitochondrial matrix side of the membrane. A helical transmembrane segment spans residues 64–85 (LHWTSERVVSVLLLGLIPAGYL). Residues 86–90 (NPCSV) are Mitochondrial intermembrane-facing. The helical transmembrane segment at 91–111 (VDYSLAAALTLHSHWGIGQVV) threads the bilayer. Residue His-102 participates in heme b binding. Over 112–120 (TDYVHGDAL) the chain is Mitochondrial matrix. Tyr-114 is a binding site for a ubiquinone. A helical membrane pass occupies residues 121 to 142 (QKATKAGLLAVSALTFAGLCYF). Over 143–159 (NYHDVGICRAVAMLWKL) the chain is Mitochondrial intermembrane.

This sequence belongs to the CybS family. Component of complex II composed of four subunits: the flavoprotein (FP) SDHA, iron-sulfur protein (IP) SDHB, and a cytochrome b560 composed of SDHC and SDHD.

The protein resides in the mitochondrion inner membrane. Its pathway is carbohydrate metabolism; tricarboxylic acid cycle. Functionally, membrane-anchoring subunit of succinate dehydrogenase (SDH) that is involved in complex II of the mitochondrial electron transport chain and is responsible for transferring electrons from succinate to ubiquinone (coenzyme Q). SDH also oxidizes malate to the non-canonical enol form of oxaloacetate, enol-oxaloacetate. Enol-oxaloacetate, which is a potent inhibitor of the succinate dehydrogenase activity, is further isomerized into keto-oxaloacetate. This is Succinate dehydrogenase [ubiquinone] cytochrome b small subunit, mitochondrial (Sdhd) from Rattus norvegicus (Rat).